The primary structure comprises 155 residues: Small ribosomal subunit protein uS7cz/uS7cy (155 aa).

The protein belongs to the universal ribosomal protein uS7 family. As to quaternary structure, part of the 30S ribosomal subunit.

Its subcellular location is the plastid. The protein resides in the chloroplast. In terms of biological role, one of the primary rRNA binding proteins, it binds directly to 16S rRNA where it nucleates assembly of the head domain of the 30S subunit. The chain is Small ribosomal subunit protein uS7cz/uS7cy (rps7-A) from Amborella trichopoda.